The sequence spans 210 residues: Dynein regulatory complex protein 12 (210 aa).

The segment at 1-23 (MPPKNKEKGKKSGAQKKKKNWGA) is disordered. Residues 7–20 (EKGKKSGAQKKKKN) are compositionally biased toward basic residues. Positions 49–161 (RDEARRAKAS…EAKYEEILHD (113 aa)) form a coiled coil. Residues 188 to 210 (HKEQQRQFGLTPPGSLRPPAPSL) form a disordered region.

The protein belongs to the DRC12 family. As to quaternary structure, component of the nexin-dynein regulatory complex (N-DRC).

The protein resides in the cytoplasm. Its subcellular location is the cytoskeleton. It localises to the flagellum axoneme. Its function is as follows. Component of the nexin-dynein regulatory complex (N-DRC), a key regulator of ciliary/flagellar motility which maintains the alignment and integrity of the distal axoneme and regulates microtubule sliding in motile axonemes. The protein is Dynein regulatory complex protein 12 of Homo sapiens (Human).